The primary structure comprises 511 residues: Exodeoxyribonuclease 7 large subunit (511 aa).

It belongs to the XseA family. Heterooligomer composed of large and small subunits.

Its subcellular location is the cytoplasm. The catalysed reaction is Exonucleolytic cleavage in either 5'- to 3'- or 3'- to 5'-direction to yield nucleoside 5'-phosphates.. In terms of biological role, bidirectionally degrades single-stranded DNA into large acid-insoluble oligonucleotides, which are then degraded further into small acid-soluble oligonucleotides. The polypeptide is Exodeoxyribonuclease 7 large subunit (Brucella abortus (strain S19)).